Here is a 370-residue protein sequence, read N- to C-terminus: 3-isopropylmalate dehydrogenase (370 aa).

77 to 90 (GPKWDSVPYEVRPE) serves as a coordination point for NAD(+). Substrate is bound by residues arginine 97, arginine 107, arginine 135, and aspartate 226. Mg(2+) is bound by residues aspartate 226, aspartate 250, and aspartate 254. 290-302 (GSAPDIAGKGIAN) contributes to the NAD(+) binding site.

It belongs to the isocitrate and isopropylmalate dehydrogenases family. LeuB type 1 subfamily. As to quaternary structure, homodimer. Mg(2+) serves as cofactor. The cofactor is Mn(2+).

It is found in the cytoplasm. The enzyme catalyses (2R,3S)-3-isopropylmalate + NAD(+) = 4-methyl-2-oxopentanoate + CO2 + NADH. It participates in amino-acid biosynthesis; L-leucine biosynthesis; L-leucine from 3-methyl-2-oxobutanoate: step 3/4. Its function is as follows. Catalyzes the oxidation of 3-carboxy-2-hydroxy-4-methylpentanoate (3-isopropylmalate) to 3-carboxy-4-methyl-2-oxopentanoate. The product decarboxylates to 4-methyl-2 oxopentanoate. This chain is 3-isopropylmalate dehydrogenase, found in Brucella suis biovar 1 (strain 1330).